We begin with the raw amino-acid sequence, 31 residues long: LysM-domain containing protein (31 aa).

A LysM 1 repeat occupies 1-28; sequence YSPSLTDLQSYNAMNGPALKAGDILAVP.

In Jatropha curcas (Barbados nut), this protein is LysM-domain containing protein.